Reading from the N-terminus, the 205-residue chain is Protein GrpE (205 aa).

The protein belongs to the GrpE family. Homodimer.

Its subcellular location is the cytoplasm. Functionally, participates actively in the response to hyperosmotic and heat shock by preventing the aggregation of stress-denatured proteins, in association with DnaK and GrpE. It is the nucleotide exchange factor for DnaK and may function as a thermosensor. Unfolded proteins bind initially to DnaJ; upon interaction with the DnaJ-bound protein, DnaK hydrolyzes its bound ATP, resulting in the formation of a stable complex. GrpE releases ADP from DnaK; ATP binding to DnaK triggers the release of the substrate protein, thus completing the reaction cycle. Several rounds of ATP-dependent interactions between DnaJ, DnaK and GrpE are required for fully efficient folding. This is Protein GrpE from Shewanella loihica (strain ATCC BAA-1088 / PV-4).